Consider the following 148-residue polypeptide: Azurin (148 aa).

Residues 1 to 20 (MLRKLAAVSLLSLLSAPLLA) form the signal peptide. One can recognise a Plastocyanin-like domain in the interval 21–148 (AECSVDIQGN…ALMKGTLTLK (128 aa)). Cysteine 23 and cysteine 46 are oxidised to a cystine. 4 residues coordinate Cu cation: histidine 66, cysteine 132, histidine 137, and methionine 141.

Its subcellular location is the periplasm. Its function is as follows. Transfers electrons from cytochrome c551 to cytochrome oxidase. The chain is Azurin (azu) from Pseudomonas aeruginosa (strain ATCC 15692 / DSM 22644 / CIP 104116 / JCM 14847 / LMG 12228 / 1C / PRS 101 / PAO1).